Consider the following 210-residue polypeptide: MKTNHPKHIPITQIKKQLLSSLDKRALVLVGLMGAGKSVIGKRIATMLGLPFYDSDQEIEKAAQMTITEFFKVYGESEFRALEQHVTLSLMKKSPLVLATGGGAYINEDIRQVINKNGISIWLKADLDILMKRVSRHPTRPLLQTANPKETMKKLMEQRYPIYAKANLTINSYKESRHTVAQNVIRSVQNYIYTEINDRNNQHANQDRHC.

An ATP-binding site is contributed by 34 to 39 (GAGKSV). Serine 38 is a binding site for Mg(2+). Aspartate 56, arginine 80, and glycine 102 together coordinate substrate. Residue arginine 140 coordinates ATP. Substrate is bound at residue arginine 159.

This sequence belongs to the shikimate kinase family. Monomer. Requires Mg(2+) as cofactor.

The protein resides in the cytoplasm. The catalysed reaction is shikimate + ATP = 3-phosphoshikimate + ADP + H(+). It participates in metabolic intermediate biosynthesis; chorismate biosynthesis; chorismate from D-erythrose 4-phosphate and phosphoenolpyruvate: step 5/7. Its function is as follows. Catalyzes the specific phosphorylation of the 3-hydroxyl group of shikimic acid using ATP as a cosubstrate. The polypeptide is Shikimate kinase (Bartonella quintana (strain Toulouse) (Rochalimaea quintana)).